Here is an 864-residue protein sequence, read N- to C-terminus: Leucine--tRNA ligase (864 aa).

A 'HIGH' region motif is present at residues 42 to 52 (PYPSGKLHMGH). The 'KMSKS' region signature appears at 624-628 (KMSKS). Residue lysine 627 coordinates ATP.

It belongs to the class-I aminoacyl-tRNA synthetase family.

The protein localises to the cytoplasm. It catalyses the reaction tRNA(Leu) + L-leucine + ATP = L-leucyl-tRNA(Leu) + AMP + diphosphate. The sequence is that of Leucine--tRNA ligase from Burkholderia cenocepacia (strain HI2424).